Reading from the N-terminus, the 65-residue chain is Large ribosomal subunit protein bL33c (65 aa).

This sequence belongs to the bacterial ribosomal protein bL33 family.

It is found in the plastid. The protein localises to the chloroplast. The protein is Large ribosomal subunit protein bL33c of Psilotum nudum (Whisk fern).